The sequence spans 334 residues: Probable allantoicase (334 aa).

It belongs to the allantoicase family.

The catalysed reaction is allantoate + H2O = (S)-ureidoglycolate + urea. It participates in nitrogen metabolism; (S)-allantoin degradation; (S)-ureidoglycolate from allantoate (aminidohydrolase route): step 1/1. The polypeptide is Probable allantoicase (Acinetobacter baylyi (strain ATCC 33305 / BD413 / ADP1)).